The primary structure comprises 330 residues: Ketol-acid reductoisomerase (NADP(+)) (330 aa).

Residues 3-184 form the KARI N-terminal Rossmann domain; that stretch reads LSVYYDKDID…GGGRMGVLET (182 aa). NADP(+) is bound by residues 26-29, S52, and S54; that span reads YGTQ. H109 is an active-site residue. G135 is a binding site for NADP(+). The region spanning 185-329 is the KARI C-terminal knotted domain; that stretch reads SFKEECESDL…EILRTPFNHE (145 aa). Mg(2+)-binding residues include D193, E197, E229, and E233. S254 is a binding site for substrate.

It belongs to the ketol-acid reductoisomerase family. The cofactor is Mg(2+).

The catalysed reaction is (2R)-2,3-dihydroxy-3-methylbutanoate + NADP(+) = (2S)-2-acetolactate + NADPH + H(+). The enzyme catalyses (2R,3R)-2,3-dihydroxy-3-methylpentanoate + NADP(+) = (S)-2-ethyl-2-hydroxy-3-oxobutanoate + NADPH + H(+). It participates in amino-acid biosynthesis; L-isoleucine biosynthesis; L-isoleucine from 2-oxobutanoate: step 2/4. It functions in the pathway amino-acid biosynthesis; L-valine biosynthesis; L-valine from pyruvate: step 2/4. Its function is as follows. Involved in the biosynthesis of branched-chain amino acids (BCAA). Catalyzes an alkyl-migration followed by a ketol-acid reduction of (S)-2-acetolactate (S2AL) to yield (R)-2,3-dihydroxy-isovalerate. In the isomerase reaction, S2AL is rearranged via a Mg-dependent methyl migration to produce 3-hydroxy-3-methyl-2-ketobutyrate (HMKB). In the reductase reaction, this 2-ketoacid undergoes a metal-dependent reduction by NADPH to yield (R)-2,3-dihydroxy-isovalerate. This is Ketol-acid reductoisomerase (NADP(+)) from Helicobacter acinonychis (strain Sheeba).